The chain runs to 169 residues: Cell division inhibitor SulA (169 aa).

Residues 106–112 (ALRTGNY) are ftsZ binding. The segment at 162–169 (KIHSNLYH) is lon protease binding.

Belongs to the SulA family. In terms of assembly, interacts with FtsZ. In terms of processing, is rapidly cleaved and degraded by the Lon protease once DNA damage is repaired.

Component of the SOS system and an inhibitor of cell division. Accumulation of SulA causes rapid cessation of cell division and the appearance of long, non-septate filaments. In the presence of GTP, binds a polymerization-competent form of FtsZ in a 1:1 ratio, thus inhibiting FtsZ polymerization and therefore preventing it from participating in the assembly of the Z ring. This mechanism prevents the premature segregation of damaged DNA to daughter cells during cell division. The chain is Cell division inhibitor SulA from Salmonella gallinarum (strain 287/91 / NCTC 13346).